A 162-amino-acid chain; its full sequence is Regulatory protein RecX (162 aa).

This sequence belongs to the RecX family.

The protein resides in the cytoplasm. Modulates RecA activity. This is Regulatory protein RecX from Pectobacterium atrosepticum (strain SCRI 1043 / ATCC BAA-672) (Erwinia carotovora subsp. atroseptica).